Consider the following 92-residue polypeptide: Small ribosomal subunit protein bS20 (92 aa).

It belongs to the bacterial ribosomal protein bS20 family.

In terms of biological role, binds directly to 16S ribosomal RNA. This chain is Small ribosomal subunit protein bS20, found in Methylacidiphilum infernorum (isolate V4) (Methylokorus infernorum (strain V4)).